Reading from the N-terminus, the 574-residue chain is Lipase maturation factor 1 (574 aa).

The interval 1 to 39 is disordered; sequence MRPDSLVMAAPEGSLRKRKVGGAEHSPASQPSLARDPAD. The Cytoplasmic segment spans residues 1 to 49; it reads MRPDSLVMAAPEGSLRKRKVGGAEHSPASQPSLARDPADSPARLHTGTF. A helical membrane pass occupies residues 50 to 72; it reads WLTRIVLLRALAFIYFVAFLVAF. At 73-127 the chain is on the lumenal side; the sequence is NQNKALIGDRGLLPCKLYLKNVQEYFQGSTGWAAWTYAPTIMWLLDWSDMNFNLD. A helical membrane pass occupies residues 128 to 151; the sequence is LIALLGLGISSFVLVTGCANMILM. The Cytoplasmic portion of the chain corresponds to 152–207; it reads TALWALYMSLVNVGQIWYSFGWESQLLETGFLGIFLSPLWTLSRLPKNTPTSQIVL. A helical transmembrane segment spans residues 208-221; that stretch reads WGFRWLIFRIMLGA. Over 222 to 292 the chain is Lumenal; sequence GLIKVRGDKC…LGRRMRILHG (71 aa). A helical membrane pass occupies residues 293–321; sequence VLQILFQVILIISGNLSFLNWLTIVPSLA. Residues 322 to 367 are Cytoplasmic-facing; sequence CFDDAALGFLFPSGPQGLKKQVLEIQREDTQRVQPKPRDRGCLVRQ. Residues 368–388 form a helical membrane-spanning segment; that stretch reads VVNISLGILVAWLSVPVVINL. Topologically, residues 389-574 are lumenal; it reads LSSRQIMNTS…LPEPPSRHTR (186 aa).

The protein belongs to the lipase maturation factor family. In terms of assembly, interacts with LPL and SEL1L. As to expression, expressed in all tissues synthesizing lipoprotein lipase (Lpl) and hepatic lipase (Lipc), including adipose tissue, skeletal muscle, heart, and liver. Expressed at higher levels in tissues that express little or no lipase activity such as testis and pancreas suggesting additional functions in these tissues.

Its subcellular location is the endoplasmic reticulum membrane. Functionally, involved in the maturation of specific proteins in the endoplasmic reticulum. Required for maturation and transport of active lipoprotein lipase (LPL) through the secretory pathway. Each LMF1 molecule chaperones 50 or more molecules of LPL. The sequence is that of Lipase maturation factor 1 (Lmf1) from Mus musculus (Mouse).